A 103-amino-acid polypeptide reads, in one-letter code: MQKIRLKLKAYDHRVLDRTVAAIVEAVKRTGADVRGPVPMPTKVKRYTVLKSPHINKDSREQFEMKIHGRMLDIVAATPETVDSLTKLDLAPEVNVEVRAMGK.

This sequence belongs to the universal ribosomal protein uS10 family. In terms of assembly, part of the 30S ribosomal subunit.

Its function is as follows. Involved in the binding of tRNA to the ribosomes. This chain is Small ribosomal subunit protein uS10, found in Campylobacter hominis (strain ATCC BAA-381 / DSM 21671 / CCUG 45161 / LMG 19568 / NCTC 13146 / CH001A).